The chain runs to 55 residues: Cytochrome b-c1 complex subunit 9 (55 aa).

Residues 1–15 lie on the Mitochondrial matrix side of the membrane; that stretch reads MKVIYNTLFKRTSTY. A helical membrane pass occupies residues 16-41; it reads AVAIIASAFFFERALDVTSVAIFEGI. The Chloroplast intermembrane segment spans residues 42 to 55; it reads NKGKLWKDIKGKYE.

The protein belongs to the UQCR10/QCR9 family. Component of the ubiquinol-cytochrome c oxidoreductase (cytochrome b-c1 complex, complex III, CIII), a multisubunit enzyme composed of 3 respiratory subunits cytochrome b, cytochrome c1 and Rieske protein, 2 core protein subunits, and additional low-molecular weight protein subunits. The complex exists as an obligatory dimer and forms supercomplexes (SCs) in the inner mitochondrial membrane with cytochrome c oxidase (complex IV, CIV).

The protein localises to the mitochondrion inner membrane. Component of the ubiquinol-cytochrome c oxidoreductase, a multisubunit transmembrane complex that is part of the mitochondrial electron transport chain which drives oxidative phosphorylation. The respiratory chain contains 3 multisubunit complexes succinate dehydrogenase (complex II, CII), ubiquinol-cytochrome c oxidoreductase (cytochrome b-c1 complex, complex III, CIII) and cytochrome c oxidase (complex IV, CIV), that cooperate to transfer electrons derived from NADH and succinate to molecular oxygen, creating an electrochemical gradient over the inner membrane that drives transmembrane transport and the ATP synthase. The cytochrome b-c1 complex catalyzes electron transfer from ubiquinol to cytochrome c, linking this redox reaction to translocation of protons across the mitochondrial inner membrane, with protons being carried across the membrane as hydrogens on the quinol. In the process called Q cycle, 2 protons are consumed from the matrix, 4 protons are released into the intermembrane space and 2 electrons are passed to cytochrome c. This chain is Cytochrome b-c1 complex subunit 9 (ox), found in Drosophila melanogaster (Fruit fly).